The sequence spans 172 residues: Probable phosphatase YqeG (172 aa).

Functionally, has low dephosphorylation activity on GMP and glucose-6-phosphate. The chain is Probable phosphatase YqeG (yqeG) from Bacillus subtilis (strain 168).